Reading from the N-terminus, the 244-residue chain is 2-C-methyl-D-erythritol 4-phosphate cytidylyltransferase (244 aa).

The protein belongs to the IspD/TarI cytidylyltransferase family. IspD subfamily.

It catalyses the reaction 2-C-methyl-D-erythritol 4-phosphate + CTP + H(+) = 4-CDP-2-C-methyl-D-erythritol + diphosphate. It participates in isoprenoid biosynthesis; isopentenyl diphosphate biosynthesis via DXP pathway; isopentenyl diphosphate from 1-deoxy-D-xylulose 5-phosphate: step 2/6. Catalyzes the formation of 4-diphosphocytidyl-2-C-methyl-D-erythritol from CTP and 2-C-methyl-D-erythritol 4-phosphate (MEP). The polypeptide is 2-C-methyl-D-erythritol 4-phosphate cytidylyltransferase (Corynebacterium diphtheriae (strain ATCC 700971 / NCTC 13129 / Biotype gravis)).